The primary structure comprises 1129 residues: Eukaryotic translation initiation factor 3 subunit A (1129 aa).

The region spanning 319–502 is the PCI domain; sequence LQRMAAHVLL…NSIYFGTDLT (184 aa). Disordered stretches follow at residues 590-633 and 836-1129; these read NNAR…NEIQ and AAEA…VKRR. 5 stretches are compositionally biased toward basic and acidic residues: residues 836–903, 923–964, 971–985, 994–1044, and 1053–1076; these read AAEA…RSER, DRND…KDTD, WRVRREPVEPQRERG, GRDD…DQPQ, and DSPRQNDRDNRDNRRPAGDRRDIR. Positions 1080–1091 are enriched in gly residues; it reads PKEGGGGGGGGN. The segment covering 1098 to 1119 has biased composition (basic and acidic residues); sequence PRDEKPPVKRDQPQDKENKAGD.

This sequence belongs to the eIF-3 subunit A family. Component of the eukaryotic translation initiation factor 3 (eIF-3) complex. The eIF-3 complex interacts with pix.

The protein localises to the cytoplasm. In terms of biological role, RNA-binding component of the eukaryotic translation initiation factor 3 (eIF-3) complex, which is involved in protein synthesis of a specialized repertoire of mRNAs and, together with other initiation factors, stimulates binding of mRNA and methionyl-tRNAi to the 40S ribosome. The eIF-3 complex specifically targets and initiates translation of a subset of mRNAs involved in cell proliferation. This is Eukaryotic translation initiation factor 3 subunit A from Drosophila mojavensis (Fruit fly).